Consider the following 518-residue polypeptide: Membrane-bound lytic murein transglycosylase F (518 aa).

An N-terminal signal peptide occupies residues 1–21 (MKKLKINYLFIGILALLLAVA). A non-LT domain region spans residues 22 to 269 (LWPSIPWFGK…RIEEKYLGHG (248 aa)). Positions 270–518 (DDFDYVDTRT…SRKGSEEKQN (249 aa)) are LT domain. The active site involves E314.

It in the N-terminal section; belongs to the bacterial solute-binding protein 3 family. The protein in the C-terminal section; belongs to the transglycosylase Slt family.

It localises to the cell outer membrane. The enzyme catalyses Exolytic cleavage of the (1-&gt;4)-beta-glycosidic linkage between N-acetylmuramic acid (MurNAc) and N-acetylglucosamine (GlcNAc) residues in peptidoglycan, from either the reducing or the non-reducing ends of the peptidoglycan chains, with concomitant formation of a 1,6-anhydrobond in the MurNAc residue.. In terms of biological role, murein-degrading enzyme that degrades murein glycan strands and insoluble, high-molecular weight murein sacculi, with the concomitant formation of a 1,6-anhydromuramoyl product. Lytic transglycosylases (LTs) play an integral role in the metabolism of the peptidoglycan (PG) sacculus. Their lytic action creates space within the PG sacculus to allow for its expansion as well as for the insertion of various structures such as secretion systems and flagella. This Escherichia coli O6:H1 (strain CFT073 / ATCC 700928 / UPEC) protein is Membrane-bound lytic murein transglycosylase F.